The primary structure comprises 502 residues: MLDLTYELPKPKVIAGAKHDWELVIGMEVHAQVSSNAKLFSGASTQFGAEPNSNVAFVDAAMPGMLPVINEYCVEQAVRTGLGLKADINLWSAFDRKNYFYPDLPQGYQISQLYHPIVGEGEVLVELGDGTARMVRIERIHMEQDAGKSIHDMDPSMSFVDLNRTGVCLMEIVSRPDIRGPEEAAAYIAKLRQIMRYLGTCDGNMQNGNLRADVNVSICRPGAYEKYQETQDFSHLGTRCEIKNMNSMRFIQQAIEVEARRQIAIVEAGGEVEQETRLYDPDKGETRSMRSKEEAHDYRYFPDPDLLPLEIEQAWVDDIKSKLPELPDEKKARFIKDFGLTDYDASVLTADLESAHYFDAVAKGRSGKLAANWVINELFGRLKKDDKDITDSPVSPAQLGGVIDLIASDAISGKIAKDLFEIVYTEGGDPAQIVEERGMKQVTDTGAIEAALDEIIAANPAQVEKAKENPKLAGWFVGQVMKATGGKANPKAVNQLVAKKLG.

This sequence belongs to the GatB/GatE family. GatB subfamily. Heterotrimer of A, B and C subunits.

The catalysed reaction is L-glutamyl-tRNA(Gln) + L-glutamine + ATP + H2O = L-glutaminyl-tRNA(Gln) + L-glutamate + ADP + phosphate + H(+). The enzyme catalyses L-aspartyl-tRNA(Asn) + L-glutamine + ATP + H2O = L-asparaginyl-tRNA(Asn) + L-glutamate + ADP + phosphate + 2 H(+). Its function is as follows. Allows the formation of correctly charged Asn-tRNA(Asn) or Gln-tRNA(Gln) through the transamidation of misacylated Asp-tRNA(Asn) or Glu-tRNA(Gln) in organisms which lack either or both of asparaginyl-tRNA or glutaminyl-tRNA synthetases. The reaction takes place in the presence of glutamine and ATP through an activated phospho-Asp-tRNA(Asn) or phospho-Glu-tRNA(Gln). The chain is Aspartyl/glutamyl-tRNA(Asn/Gln) amidotransferase subunit B from Ruegeria sp. (strain TM1040) (Silicibacter sp.).